A 186-amino-acid chain; its full sequence is Lipid A palmitoyltransferase PagP (186 aa).

An N-terminal signal peptide occupies residues 1–25; that stretch reads MNVSKYVAIFSFVFIQLISVGKVFA. Catalysis depends on residues His-58, Asp-101, and Ser-102.

The protein belongs to the lipid A palmitoyltransferase family. As to quaternary structure, homodimer.

Its subcellular location is the cell outer membrane. The enzyme catalyses lipid A (E. coli) + a 1-hexadecanoyl-2-acyl-sn-glycero-3-phosphocholine = hepta-acyl lipid A (E. coli) + a 2-acyl-sn-glycero-3-phosphocholine. It catalyses the reaction lipid IIA + a 1-hexadecanoyl-2-acyl-sn-glycero-3-phosphocholine = lipid IIB + a 2-acyl-sn-glycero-3-phosphocholine. It carries out the reaction lipid IVA (E. coli) + a 1-hexadecanoyl-2-acyl-sn-glycero-3-phosphocholine = lipid IVB (E. coli) + a 2-acyl-sn-glycero-3-phosphocholine. Its activity is regulated as follows. Inhibited by lauryldimethylamine oxide (LDAO) and dodecylphosphocholine (DPC). In terms of biological role, transfers a palmitate residue from the sn-1 position of a phospholipid to the N-linked hydroxymyristate on the proximal unit of lipid A or its precursors. Phosphatidylglycerol (PtdGro), phosphatidylethanolamine (PtdEtn), phosphatidylserine (PtdSer) and phosphatidic acid (Ptd-OH) are all effective acyl donors. This is Lipid A palmitoyltransferase PagP from Escherichia coli (strain K12).